Reading from the N-terminus, the 1038-residue chain is SEH-associated protein 4 (1038 aa).

Residues 50–90 (KDFGSITCLDYSESEIGMIGVGEKNGYLRIFNISGQNSSSP) form a WD 1 repeat. Residues Ser123 and Ser136 each carry the phosphoserine modification. 3 WD repeats span residues 147-189 (KKQR…DSHE), 235-276 (QHPT…DQAS), and 544-587 (NTWR…SNQD).

It belongs to the WD repeat mio family. Component of the SEA complex composed of at least IML1/SEA1, RTC1/SEA2, MTC5/SEA3, NPR2, NPR3, SEA4, SEC13 and SEH1.

It localises to the cytoplasm. It is found in the vacuole membrane. Component of the SEA complex which coats the vacuolar membrane and is involved in intracellular trafficking, autophagy, response to nitrogen starvation, and amino acid biogenesis. This is SEH-associated protein 4 (SEA4) from Saccharomyces cerevisiae (strain ATCC 204508 / S288c) (Baker's yeast).